The chain runs to 229 residues: Heptaprenylglyceryl phosphate synthase (229 aa).

Lys-12 is a sn-glycerol 1-phosphate binding site. Asp-14 and Ser-40 together coordinate Mg(2+). Sn-glycerol 1-phosphate contacts are provided by residues 159 to 164, Gly-189, and 209 to 210; these read YLEYSG and GN.

Belongs to the GGGP/HepGP synthase family. Group I subfamily. As to quaternary structure, homodimer. Mg(2+) serves as cofactor.

It catalyses the reaction sn-glycerol 1-phosphate + all-trans-heptaprenyl diphosphate = 3-heptaprenyl-sn-glycero-1-phosphate + diphosphate. It functions in the pathway membrane lipid metabolism; glycerophospholipid metabolism. Its function is as follows. Prenyltransferase that catalyzes in vivo the transfer of the heptaprenyl moiety of heptaprenyl pyrophosphate (HepPP; 35 carbon atoms) to the C3 hydroxyl of sn-glycerol-1-phosphate (G1P), producing heptaprenylglyceryl phosphate (HepGP). This reaction is an ether-bond-formation step in the biosynthesis of archaea-type G1P-based membrane lipids found in Bacillales. The chain is Heptaprenylglyceryl phosphate synthase from Bacillus mycoides (strain KBAB4) (Bacillus weihenstephanensis).